A 518-amino-acid chain; its full sequence is MIPDVSQALAWLEKHPQALKGIQRGLERETLRVNADGTLATTGHPEALGSALTHKWITTDFAEALLEFITPVDGDIQHMLTFMRDLHRYTARKLGDERMWPLSMPCYIAEGQDIELAQYGTSNTGRFKTLYREGLKNRYGALMQTISGVHYNFSLPMAFWQAKCGVTEGDAAKEKISAGYFRLIRNYYRFGWVIPYLFGASPAICSSFLQGKPTTLPFEKTDCGMYYLPYATSLRLSDLGYTNKSQSNLGITFNDLHEYVAGLKRAIKTPSEEYVQIGLEKDGKRLQINSNVLQIENELYAPIRPKRVTRSGESPSDALLRGGIEYIEVRSLDINPFSPIGVDEQQVRFLDLFMVWCVLADAPEMSSSELLCTRANWNRVILEGRKPGLTLGIGCETAQFPLPKVGKDLFRDLRRVAQTLDSIHGGEDYQKVCDELVACFDNPELTFSARILRSMIDTGIGGTGKAFGEAYRNLLREEPLEILQEEEFIAERDASVRRQQEIEAADTEPFAAWLAKHD.

Belongs to the glutamate--cysteine ligase type 1 family. Type 1 subfamily.

It carries out the reaction L-cysteine + L-glutamate + ATP = gamma-L-glutamyl-L-cysteine + ADP + phosphate + H(+). It functions in the pathway sulfur metabolism; glutathione biosynthesis; glutathione from L-cysteine and L-glutamate: step 1/2. This is Glutamate--cysteine ligase from Salmonella arizonae (strain ATCC BAA-731 / CDC346-86 / RSK2980).